We begin with the raw amino-acid sequence, 371 residues long: Peptide chain release factor 2 (371 aa).

Gln253 is modified (N5-methylglutamine).

The protein belongs to the prokaryotic/mitochondrial release factor family. Methylated by PrmC. Methylation increases the termination efficiency of RF2.

It localises to the cytoplasm. Peptide chain release factor 2 directs the termination of translation in response to the peptide chain termination codons UGA and UAA. This is Peptide chain release factor 2 (prfB) from Mycobacterium bovis (strain ATCC BAA-935 / AF2122/97).